A 108-amino-acid chain; its full sequence is Nucleoid-associated protein GWCH70_0020 (108 aa).

A disordered region spans residues 1 to 34 (MMRGGMGNMQKMMKQMQKMQKEMQKAQEQLAEKT). The segment covering 9-18 (MQKMMKQMQK) has biased composition (low complexity). The span at 19–34 (MQKEMQKAQEQLAEKT) shows a compositional bias: basic and acidic residues.

This sequence belongs to the YbaB/EbfC family. Homodimer.

The protein resides in the cytoplasm. It is found in the nucleoid. Binds to DNA and alters its conformation. May be involved in regulation of gene expression, nucleoid organization and DNA protection. In Geobacillus sp. (strain WCH70), this protein is Nucleoid-associated protein GWCH70_0020.